The following is a 777-amino-acid chain: Glucocorticoid receptor (777 aa).

Over residues 1–14 the composition is skewed to basic and acidic residues; sequence MDSKESLTPGREEN. Residues 1-23 form a disordered region; the sequence is MDSKESLTPGREENPSSVLAQER. The modulating stretch occupies residues 1-420; that stretch reads MDSKESLTPG…TATTGPPPKL (420 aa). At Thr-8 the chain carries Phosphothreonine. Arg-23 is modified (omega-N-methylarginine). Ser-45, Ser-113, Ser-134, and Ser-141 each carry phosphoserine. The segment covering 130 to 140 has biased composition (polar residues); it reads NRSTSVPENPK. The disordered stretch occupies residues 130–183; sequence NRSTSVPENPKSSASTAVSAAPTEKEFPKTHSDISSEQQHLKGQTGTNGGNVKL. Over residues 141–150 the composition is skewed to low complexity; it reads SSASTAVSAA. Positions 152–163 are enriched in basic and acidic residues; it reads TEKEFPKTHSDI. A compositionally biased stretch (polar residues) spans 164 to 174; sequence SSEQQHLKGQT. Residues Ser-203, Ser-211, and Ser-226 each carry the phosphoserine modification. Lys-258 is covalently cross-linked (Glycyl lysine isopeptide (Lys-Gly) (interchain with G-Cter in SUMO2)). The residue at position 267 (Ser-267) is a Phosphoserine. Glycyl lysine isopeptide (Lys-Gly) (interchain with G-Cter in SUMO); alternate cross-links involve residues Lys-277 and Lys-293. Residues Lys-277 and Lys-293 each participate in a glycyl lysine isopeptide (Lys-Gly) (interchain with G-Cter in SUMO2); alternate cross-link. Residues 394–414 are compositionally biased toward low complexity; it reads SSPSMRPDVSSPPSSSSTATT. The interval 394–415 is disordered; it reads SSPSMRPDVSSPPSSSSTATTG. Ser-404 is subject to Phosphoserine. Lys-419 participates in a covalent cross-link: Glycyl lysine isopeptide (Lys-Gly) (interchain with G-Cter in ubiquitin). 2 consecutive NR C4-type zinc fingers follow at residues 421–441 and 457–476; these read CLVCSDEASGCHYGVLTCGSC and CAGRNDCIIDKIRRKNCPAC. Positions 421-486 form a DNA-binding region, nuclear receptor; it reads CLVCSDEASG…RYRKCLQAGM (66 aa). 4 positions are modified to N6-acetyllysine: Lys-480, Lys-492, Lys-494, and Lys-495. Positions 485–777 are interaction with CLOCK; sequence GMNLEARKTK…NIKKLLFHQK (293 aa). The segment at 487–523 is hinge; sequence NLEARKTKKKIKGIQQATTGVSQETPENPANKTIVPA. In terms of domain architecture, NR LBD spans 524-758; sequence TLPQLTPTLV…FPEMLAEIIT (235 aa). The segment at 532-697 is interaction with CRY1; the sequence is LVSLLEVIEP…EIRMTYIKEL (166 aa). A Glycyl lysine isopeptide (Lys-Gly) (interchain with G-Cter in SUMO) cross-link involves residue Lys-703.

The protein belongs to the nuclear hormone receptor family. NR3 subfamily. As to quaternary structure, heteromultimeric cytoplasmic complex with HSP90AA1, HSPA1A/HSPA1B, and FKBP5 or another immunophilin such as PPID, STIP1, or the immunophilin homolog PPP5C. Upon ligand binding FKBP5 dissociates from the complex and FKBP4 takes its place, thereby linking the complex to dynein and mediating transport to the nucleus, where the complex dissociates. Probably forms a complex composed of chaperones HSP90 and HSP70, co-chaperones CDC37, PPP5C, TSC1 and client protein TSC2, CDK4, AKT, RAF1 and NR3C1; this complex does not contain co-chaperones STIP1/HOP and PTGES3/p23. Directly interacts with UNC45A. Binds to DNA as a homodimer, and as heterodimer with NR3C2 or the retinoid X receptor. Binds STAT5A and STAT5B homodimers and heterodimers. Interacts with NRIP1, POU2F1, POU2F2 and TRIM28. Interacts with several coactivator complexes, including the SMARCA4 complex, CREBBP/EP300, TADA2L (Ada complex) and p160 coactivators such as NCOA2 and NCOA6. Interaction with BAG1 inhibits transactivation. Interacts with HEXIM1 and TGFB1I1. Interacts with NCOA1. Interacts with NCOA3, SMARCA4, SMARCC1, SMARCD1, and SMARCE1. Interacts with CLOCK, CRY1 and CRY2 in a ligand-dependent fashion. Interacts with CIART. Interacts with RWDD3. Interacts with UBE2I/UBC9 and this interaction is enhanced in the presence of RWDD3. Interacts with GRIP1. Interacts with NR4A3 (via nuclear receptor DNA-binding domain), represses transcription activity of NR4A3 on the POMC promoter Nur response element (NurRE). Directly interacts with PNRC2 to attract and form a complex with UPF1 and DCP1A; the interaction leads to rapid mRNA degradation. Interacts with GSK3B. Interacts with FNIP1 and FNIP2. Interacts (via C-terminus) with HNRNPU (via C-terminus). Interacts with MCM3AP. Interacts (via domain NR LBD) with HSP90AA1 and HSP90AB1. In the absence of hormonal ligand, interacts with TACC1. Interacts (via NR LBD domain) with ZNF764 (via KRAB domain); the interaction regulates transcription factor activity of NR3C1 by directing its actions toward certain biologic pathways. In terms of processing, acetylation by CLOCK reduces its binding to glucocorticoid response elements and its transcriptional activity. Post-translationally, increased proteasome-mediated degradation in response to glucocorticoids. Phosphorylated in the absence of hormone; becomes hyperphosphorylated in the presence of glucocorticoid. The Ser-203, Ser-226 and Ser-404-phosphorylated forms are mainly cytoplasmic, and the Ser-211-phosphorylated form is nuclear. Phosphorylation at Ser-211 increases transcriptional activity. Phosphorylation at Ser-203, Ser-226 and Ser-404 decreases signaling capacity. Phosphorylation at Ser-404 may protect from glucocorticoid-induced apoptosis. Phosphorylation at Ser-203 and Ser-211 is not required in regulation of chromosome segregation. May be dephosphorylated by PPP5C, attenuates NR3C1 action. In terms of processing, ubiquitinated by UBR5, leading to its degradation: UBR5 specifically recognizes and binds ligand-bound NR3C1 when it is not associated with coactivators (NCOAs). In presence of NCOAs, the UBR5-degron is not accessible, preventing its ubiquitination and degradation. Post-translationally, sumoylation at Lys-277 and Lys-293 negatively regulates its transcriptional activity. Sumoylation at Lys-703 positively regulates its transcriptional activity in the presence of RWDD3. Sumoylation at Lys-277 and Lys-293 is dispensable whereas sumoylation at Lys-703 is critical for the stimulatory effect of RWDD3 on its transcriptional activity. Heat shock increases sumoylation in a RWDD3-dependent manner.

The protein resides in the cytoplasm. It is found in the nucleus. It localises to the mitochondrion. The protein localises to the cytoskeleton. Its subcellular location is the spindle. The protein resides in the microtubule organizing center. It is found in the centrosome. It localises to the chromosome. The protein localises to the nucleoplasm. In terms of biological role, receptor for glucocorticoids (GC). Has a dual mode of action: as a transcription factor that binds to glucocorticoid response elements (GRE), both for nuclear and mitochondrial DNA, and as a modulator of other transcription factors. Affects inflammatory responses, cellular proliferation and differentiation in target tissues. Involved in chromatin remodeling. Plays a role in rapid mRNA degradation by binding to the 5' UTR of target mRNAs and interacting with PNRC2 in a ligand-dependent manner which recruits the RNA helicase UPF1 and the mRNA-decapping enzyme DCP1A, leading to RNA decay. Could act as a coactivator for STAT5-dependent transcription upon growth hormone (GH) stimulation and could reveal an essential role of hepatic GR in the control of body growth. Mediates glucocorticoid-induced apoptosis. Promotes accurate chromosome segregation during mitosis. May act as a tumor suppressor. May play a negative role in adipogenesis through the regulation of lipolytic and antilipogenic gene expression. This is Glucocorticoid receptor (NR3C1) from Pongo abelii (Sumatran orangutan).